A 398-amino-acid chain; its full sequence is 2,3-bisphosphoglycerate-independent phosphoglycerate mutase (398 aa).

The protein belongs to the BPG-independent phosphoglycerate mutase family. A-PGAM subfamily.

The catalysed reaction is (2R)-2-phosphoglycerate = (2R)-3-phosphoglycerate. Its pathway is carbohydrate degradation; glycolysis; pyruvate from D-glyceraldehyde 3-phosphate: step 3/5. In terms of biological role, catalyzes the interconversion of 2-phosphoglycerate and 3-phosphoglycerate. This is 2,3-bisphosphoglycerate-independent phosphoglycerate mutase from Methanosarcina barkeri (strain Fusaro / DSM 804).